The following is a 219-amino-acid chain: Glycerol-3-phosphate acyltransferase 2 (219 aa).

The next 5 membrane-spanning stretches (helical) occupy residues 1 to 21 (MVFW…GSTP), 55 to 75 (WPAL…VVFA), 93 to 113 (ALDL…AVLL), 135 to 155 (VLLA…GVAL), and 160 to 180 (IVSL…CGLE).

The protein belongs to the PlsY family. In terms of assembly, probably interacts with PlsX.

The protein localises to the cell inner membrane. It carries out the reaction an acyl phosphate + sn-glycerol 3-phosphate = a 1-acyl-sn-glycero-3-phosphate + phosphate. It functions in the pathway lipid metabolism; phospholipid metabolism. In terms of biological role, catalyzes the transfer of an acyl group from acyl-phosphate (acyl-PO(4)) to glycerol-3-phosphate (G3P) to form lysophosphatidic acid (LPA). This enzyme utilizes acyl-phosphate as fatty acyl donor, but not acyl-CoA or acyl-ACP. The sequence is that of Glycerol-3-phosphate acyltransferase 2 from Rhizobium johnstonii (strain DSM 114642 / LMG 32736 / 3841) (Rhizobium leguminosarum bv. viciae).